The sequence spans 354 residues: MNGTEGPMFYVPMSNATGVVKSPYDYPQYYLVAPWAYGCLAAYMFFLIITGFPINFLTLYVTIEHKKLRTPLNYILLNLAISDLFMVFGGFTTTMYTSLHGYFVFGRIGCNLEGFFATLGGEMGLWSLVVLAFERWMVVCKPVSNFRFGENHAIMGVVFTWFMACTCAVPPLVGWSRYIPEGMQCSCGVDYYTRAPGYNNESFVIYMFLVHFIIPLIVIFFCYGRLVCTVKDAAAQQQESETTQRAEREVTRMVVIMVIGFLICWIPYASVAWYIFTHQGSEFGPVFMTVPAFFAKSAAVYNPCIYICMNKQFRHCMITTLCCGKNPFEEEEGASTTASKTEASSVSSSSVSPA.

Over 1–36 (MNGTEGPMFYVPMSNATGVVKSPYDYPQYYLVAPWA) the chain is Extracellular. Residues asparagine 2 and asparagine 15 are each glycosylated (N-linked (GlcNAc...) asparagine). Residues 37-61 (YGCLAAYMFFLIITGFPINFLTLYV) traverse the membrane as a helical segment. At 62-73 (TIEHKKLRTPLN) the chain is on the cytoplasmic side. Residues 74 to 96 (YILLNLAISDLFMVFGGFTTTMY) traverse the membrane as a helical segment. The Extracellular segment spans residues 97 to 110 (TSLHGYFVFGRIGC). Cysteine 110 and cysteine 187 are oxidised to a cystine. The chain crosses the membrane as a helical span at residues 111 to 133 (NLEGFFATLGGEMGLWSLVVLAF). Positions 134–136 (ERW) match the 'Ionic lock' involved in activated form stabilization motif. Residues 134 to 152 (ERWMVVCKPVSNFRFGENH) are Cytoplasmic-facing. A helical membrane pass occupies residues 153–173 (AIMGVVFTWFMACTCAVPPLV). Residues 174–202 (GWSRYIPEGMQCSCGVDYYTRAPGYNNES) are Extracellular-facing. The chain crosses the membrane as a helical span at residues 203–224 (FVIYMFLVHFIIPLIVIFFCYG). Over 225 to 252 (RLVCTVKDAAAQQQESETTQRAEREVTR) the chain is Cytoplasmic. A helical membrane pass occupies residues 253–274 (MVVIMVIGFLICWIPYASVAWY). At 275 to 286 (IFTHQGSEFGPV) the chain is on the extracellular side. Residues 287 to 308 (FMTVPAFFAKSAAVYNPCIYIC) form a helical membrane-spanning segment. An N6-(retinylidene)lysine modification is found at lysine 296. Over 309–354 (MNKQFRHCMITTLCCGKNPFEEEEGASTTASKTEASSVSSSSVSPA) the chain is Cytoplasmic. Residues cysteine 322 and cysteine 323 are each lipidated (S-palmitoyl cysteine). The tract at residues 333-354 (GASTTASKTEASSVSSSSVSPA) is disordered. Positions 334–354 (ASTTASKTEASSVSSSSVSPA) are enriched in low complexity.

The protein belongs to the G-protein coupled receptor 1 family. Opsin subfamily. Phosphorylated on some or all of the serine and threonine residues present in the C-terminal region. In terms of processing, contains one covalently linked retinal chromophore.

It localises to the membrane. The protein resides in the cell projection. Its subcellular location is the cilium. It is found in the photoreceptor outer segment. Photoreceptor required for image-forming vision at low light intensity. While most salt water fish species use retinal as chromophore, most freshwater fish use 3-dehydroretinal, or a mixture of retinal and 3-dehydroretinal. Light-induced isomerization of 11-cis to all-trans retinal triggers a conformational change that activates signaling via G-proteins. Subsequent receptor phosphorylation mediates displacement of the bound G-protein alpha subunit by arrestin and terminates signaling. This is Rhodopsin (rho) from Cyprinus carpio (Common carp).